Here is a 423-residue protein sequence, read N- to C-terminus: Transcription factor AP-2-epsilon (423 aa).

Residues 1–108 (MLVHSYSSME…EDAGLLSQPH (108 aa)) are disordered. The span at 14-27 (GLSSSSPGGRLSQL) shows a compositional bias: low complexity. Residues 50–55 (YFPPPY) carry the PPxY motif motif. Residues 57–70 (QSSLSYSQSQDGGY) are compositionally biased toward low complexity. Residues 79–93 (SLNSLHQHQQAAWHS) show a composition bias toward polar residues. The H-S-H (helix-span-helix), dimerization stretch occupies residues 276–405 (RRKAANVTLL…YLLEALKLLD (130 aa)).

The protein belongs to the AP-2 family. In terms of assembly, binds DNA as a dimer. Can form homodimers or heterodimers with other AP-2 family members.

The protein localises to the nucleus. Sequence-specific DNA-binding protein that interacts with inducible viral and cellular enhancer elements to regulate transcription of selected genes. AP-2 factors bind to the consensus sequence 5'-GCCNNNGGC-3' and activate genes involved in a large spectrum of important biological functions. The sequence is that of Transcription factor AP-2-epsilon from Danio rerio (Zebrafish).